A 399-amino-acid chain; its full sequence is L-asparaginase-like protein GE13669 (399 aa).

Residues 1–22 form the signal peptide; that stretch reads MLAQSCCLRLLILLLLFKSTCS. Intrachain disulfides connect cysteine 90/cysteine 95, cysteine 189/cysteine 205, and cysteine 344/cysteine 371.

Belongs to the Ntn-hydrolase family.

The polypeptide is L-asparaginase-like protein GE13669 (Drosophila yakuba (Fruit fly)).